The sequence spans 393 residues: Formate-dependent phosphoribosylglycinamide formyltransferase (393 aa).

Residues 22–23 and Glu82 each bind N(1)-(5-phospho-beta-D-ribosyl)glycinamide; that span reads EL. ATP-binding positions include Arg114, Lys155, 160 to 165, 195 to 198, and Glu203; these read SSGKGQ and EGFI. The ATP-grasp domain occupies 119–308; it reads RLAAEELGLP…EFALHARAIL (190 aa). Mg(2+) contacts are provided by Glu267 and Glu279. N(1)-(5-phospho-beta-D-ribosyl)glycinamide is bound by residues Asp286, Lys356, and 363-364; that span reads RR.

It belongs to the PurK/PurT family. In terms of assembly, homodimer.

The catalysed reaction is N(1)-(5-phospho-beta-D-ribosyl)glycinamide + formate + ATP = N(2)-formyl-N(1)-(5-phospho-beta-D-ribosyl)glycinamide + ADP + phosphate + H(+). The protein operates within purine metabolism; IMP biosynthesis via de novo pathway; N(2)-formyl-N(1)-(5-phospho-D-ribosyl)glycinamide from N(1)-(5-phospho-D-ribosyl)glycinamide (formate route): step 1/1. Functionally, involved in the de novo purine biosynthesis. Catalyzes the transfer of formate to 5-phospho-ribosyl-glycinamide (GAR), producing 5-phospho-ribosyl-N-formylglycinamide (FGAR). Formate is provided by PurU via hydrolysis of 10-formyl-tetrahydrofolate. In Azoarcus sp. (strain BH72), this protein is Formate-dependent phosphoribosylglycinamide formyltransferase.